The following is a 476-amino-acid chain: MVAVPTSTASLQALPQYVVADIDLADFGRKELSIAETEMPGLIALRIKYGSEKPLKGARIAGSLHMTIQTGVLIETLVALGADVRWASCNIFSTQDHAAAAIAASGVPVFATKGETLDEYWAYTHRILEWGDGGTPNMILDDGGDATGLVMLGSKAESDSSVLDNPGNEEETALFASIRTKLAEDSSFYSRIKSSIQGVTEETTTGVARLYQMQKSGELPFPAINVNDSVTKSKFDNLYGCRESLVDGIKRATDVMVAGKVALVMGYGDVGKGSAQSLRGLGATVMIAEIDPICALQAAMEGYRVVRLDEVVQDVDIFVTSTGNFQVIRHEHLIRMKDEAIVCNIGHFDNEIDVASLKDYPWENIKPQVDHITLPSGNKIILLAEGRLVNLGCATGHPSFVMSNSFTNQVLAQIELFSKGDQYADQVYVLPKHLDEMVARLHLEKIGARLTELTKQQADYISVPVEGPYKPDHYRY.

Residues Thr-67, Asp-142, and Glu-202 each contribute to the substrate site. 203-205 (TTT) contacts NAD(+). 2 residues coordinate substrate: Lys-232 and Asp-236. Residues Asn-237, 266–271 (GYGDVG), Glu-289, Asn-324, 345–347 (IGH), and Asn-390 contribute to the NAD(+) site.

It belongs to the adenosylhomocysteinase family. NAD(+) serves as cofactor.

Its subcellular location is the cytoplasm. It carries out the reaction S-adenosyl-L-homocysteine + H2O = L-homocysteine + adenosine. Its pathway is amino-acid biosynthesis; L-homocysteine biosynthesis; L-homocysteine from S-adenosyl-L-homocysteine: step 1/1. Its function is as follows. May play a key role in the regulation of the intracellular concentration of adenosylhomocysteine. The chain is Adenosylhomocysteinase from Prochlorococcus marinus (strain MIT 9313).